The following is a 476-amino-acid chain: Probable coniferyl aldehyde dehydrogenase (476 aa).

Catalysis depends on residues Glu-225 and Cys-259.

The protein belongs to the aldehyde dehydrogenase family. In terms of assembly, homodimer.

The enzyme catalyses (E)-coniferaldehyde + NADP(+) + H2O = (E)-ferulate + NADPH + 2 H(+). The catalysed reaction is (E)-coniferaldehyde + NAD(+) + H2O = (E)-ferulate + NADH + 2 H(+). The chain is Probable coniferyl aldehyde dehydrogenase (calB) from Pseudomonas aeruginosa (strain ATCC 15692 / DSM 22644 / CIP 104116 / JCM 14847 / LMG 12228 / 1C / PRS 101 / PAO1).